The sequence spans 94 residues: uncharacterized protein (94 aa).

Its function is as follows. Could be a silencing control element for the regulation of the restriction system. This is an uncharacterized protein from Herpetosiphon aurantiacus (Herpetosiphon giganteus).